Reading from the N-terminus, the 289-residue chain is Cbb3-type cytochrome c oxidase subunit FixP (289 aa).

Residues 1-33 (MADKHKHVDEVSGVETTGHEWDGIRELNNPLPR) lie on the Cytoplasmic side of the membrane. Residues 34–56 (WWVYSFYATIIWAIGYAVAYPSW) form a helical membrane-spanning segment. The Periplasmic segment spans residues 57–289 (PMLTEATKGV…VFVHSLGGGE (233 aa)). Cytochrome c domains lie at 110–198 (FAVS…MSLT) and 205–286 (HLVE…HSLG). 8 residues coordinate heme c: Cys-123, Cys-126, His-127, Met-175, Cys-218, Cys-221, His-222, and Met-263.

This sequence belongs to the CcoP / FixP family. Component of the cbb3-type cytochrome c oxidase at least composed of FixN, FixO, FixQ and FixP. It depends on heme c as a cofactor.

It is found in the cell inner membrane. It participates in energy metabolism; oxidative phosphorylation. Its function is as follows. C-type cytochrome. Part of the cbb3-type cytochrome c oxidase complex. FixP subunit is required for transferring electrons from donor cytochrome c via its heme groups to FixO subunit. From there, electrons are shuttled to the catalytic binuclear center of FixN subunit where oxygen reduction takes place. The complex also functions as a proton pump. This is Cbb3-type cytochrome c oxidase subunit FixP from Sinorhizobium medicae (strain WSM419) (Ensifer medicae).